The chain runs to 429 residues: Cyclin-B2-2 (429 aa).

The segment at 66-98 is disordered; that stretch reads SQRKQESCDKKKLDSLHPSISRSQEETKKLKPS. Residues 68–80 are compositionally biased toward basic and acidic residues; sequence RKQESCDKKKLDS.

This sequence belongs to the cyclin family. Cyclin AB subfamily. Interacts with CDC20-1 and CDC20-2. In terms of tissue distribution, expressed in roots.

In Arabidopsis thaliana (Mouse-ear cress), this protein is Cyclin-B2-2 (CYCB2-2).